We begin with the raw amino-acid sequence, 190 residues long: RRP15-like protein (190 aa).

A compositionally biased stretch (basic and acidic residues) spans 1–11 (MSTKNRDRLVV). 2 disordered regions span residues 1-69 (MSTK…TRKE) and 119-190 (QKTM…SDED). Residues 55–66 (QRKKKKVIKKLT) show a composition bias toward basic residues. Residues 59–84 (KKVIKKLTRKEQSLKHSVKEYRIKLA) adopt a coiled-coil conformation. Residues 119 to 153 (QKTMSDAVKEKMTARDRKEARERFDGKNFDSDKFA) are compositionally biased toward basic and acidic residues. A compositionally biased stretch (acidic residues) spans 167–190 (GEEEDEQMNIGDDEIDAGNYSDED).

Belongs to the RRP15 family.

The protein is RRP15-like protein of Caenorhabditis briggsae.